We begin with the raw amino-acid sequence, 151 residues long: Ribosome maturation factor RimP (151 aa).

The protein belongs to the RimP family.

It localises to the cytoplasm. Its function is as follows. Required for maturation of 30S ribosomal subunits. This chain is Ribosome maturation factor RimP, found in Photobacterium profundum (strain SS9).